The sequence spans 247 residues: D-alanyl-D-alanine dipeptidase (247 aa).

Residues His-140 and Asp-147 each coordinate Zn(2+). Glu-215 serves as the catalytic Proton donor/acceptor. His-218 is a binding site for Zn(2+).

This sequence belongs to the peptidase M15D family. It depends on Zn(2+) as a cofactor.

Its subcellular location is the cytoplasm. The enzyme catalyses D-alanyl-D-alanine + H2O = 2 D-alanine. Catalyzes hydrolysis of the D-alanyl-D-alanine dipeptide. May have a role in cell-wall turnover. The chain is D-alanyl-D-alanine dipeptidase from Synechocystis sp. (strain ATCC 27184 / PCC 6803 / Kazusa).